A 1403-amino-acid polypeptide reads, in one-letter code: DNA-directed RNA polymerase subunit beta' (1403 aa).

Zn(2+)-binding residues include Cys70, Cys72, Cys85, and Cys88. 3 residues coordinate Mg(2+): Asp460, Asp462, and Asp464. 4 residues coordinate Zn(2+): Cys814, Cys888, Cys895, and Cys898. The disordered stretch occupies residues 1369–1403 (RRKRRMLEQPESLTADTGTSHYGEDEISESGAATA). The segment covering 1379–1388 (ESLTADTGTS) has biased composition (polar residues).

Belongs to the RNA polymerase beta' chain family. In terms of assembly, the RNAP catalytic core consists of 2 alpha, 1 beta, 1 beta' and 1 omega subunit. When a sigma factor is associated with the core the holoenzyme is formed, which can initiate transcription. Mg(2+) is required as a cofactor. Requires Zn(2+) as cofactor.

It catalyses the reaction RNA(n) + a ribonucleoside 5'-triphosphate = RNA(n+1) + diphosphate. In terms of biological role, DNA-dependent RNA polymerase catalyzes the transcription of DNA into RNA using the four ribonucleoside triphosphates as substrates. The sequence is that of DNA-directed RNA polymerase subunit beta' from Nitrosococcus oceani (strain ATCC 19707 / BCRC 17464 / JCM 30415 / NCIMB 11848 / C-107).